The primary structure comprises 274 residues: MKKTQTWIVTCIYLQLLLFNPLVKTKGLCRNRVTDDVKDVTKLVANLPKDYKIALKYVPGMDVLPSHCWISVMVEQLSVSLTDLLDKFSNISEGLSNYSIIDKLVKIVDDLVECVEGHSSENVKKSSKSPEPRLFTPEEFFRIFNRSIDAFKDLEMVASKTSECVVSSTLSPEKDSRVSVTKPFMLPPVAASSLRNDSSSSNRKATNPIEDSSIQWAVMALPACFSLVIGFAFGAFYWKKKQPNLTRTVENIQINEEDNEISMLQEKEREFQEV.

Residues 1-25 (MKKTQTWIVTCIYLQLLLFNPLVKT) form the signal peptide. Topologically, residues 26-215 (KGLCRNRVTD…TNPIEDSSIQ (190 aa)) are extracellular. Intrachain disulfides connect cysteine 29/cysteine 114 and cysteine 68/cysteine 164. N-linked (GlcNAc...) asparagine glycans are attached at residues asparagine 90, asparagine 97, asparagine 145, and asparagine 196. Residues 216 to 238 (WAVMALPACFSLVIGFAFGAFYW) traverse the membrane as a helical segment. The Cytoplasmic portion of the chain corresponds to 239–274 (KKKQPNLTRTVENIQINEEDNEISMLQEKEREFQEV).

The protein belongs to the SCF family. Homodimer, non-covalently linked. In terms of processing, a soluble form is produced by proteolytic processing of isoform 1 in the extracellular domain.

Its subcellular location is the cell membrane. It localises to the secreted. The protein localises to the cytoplasm. The protein resides in the cytoskeleton. It is found in the cell projection. Its subcellular location is the lamellipodium. It localises to the filopodium. In terms of biological role, stimulates the proliferation of mast cells. Able to augment the proliferation of both myeloid and lymphoid hematopoietic progenitors in bone marrow culture. Also mediates cell-cell adhesion. Acts synergistically with other cytokines, probably interleukins. The protein is Kit ligand (KITLG) of Felis catus (Cat).